We begin with the raw amino-acid sequence, 98 residues long: NADH-ubiquinone oxidoreductase chain 4L (98 aa).

3 helical membrane passes run 1–21 (MSITTLNIMVAFTMALLGMFT), 29–49 (SLLCLEGMMLSLFMLATIVSL), and 61–81 (VILLVFAACEAAVGLALLVMV).

Belongs to the complex I subunit 4L family. In terms of assembly, core subunit of respiratory chain NADH dehydrogenase (Complex I) which is composed of 45 different subunits.

The protein localises to the mitochondrion inner membrane. The catalysed reaction is a ubiquinone + NADH + 5 H(+)(in) = a ubiquinol + NAD(+) + 4 H(+)(out). Functionally, core subunit of the mitochondrial membrane respiratory chain NADH dehydrogenase (Complex I) which catalyzes electron transfer from NADH through the respiratory chain, using ubiquinone as an electron acceptor. Part of the enzyme membrane arm which is embedded in the lipid bilayer and involved in proton translocation. In Ochotona collaris (Collared pika), this protein is NADH-ubiquinone oxidoreductase chain 4L (MT-ND4L).